The chain runs to 500 residues: Kynurenine 3-monooxygenase acdD (500 aa).

Residues Val-17 and 36-38 (ELR) contribute to the FAD site. An N-linked (GlcNAc...) asparagine glycan is attached at Asn-50. Ala-58 is an FAD binding site. Positions 89 and 106 each coordinate L-kynurenine. Residues Arg-118 and Leu-143 each contribute to the FAD site. N-linked (GlcNAc...) asparagine glycosylation is present at Asn-163. FAD-binding positions include Asp-321 and 332 to 335 (QGLN). Asn-392 and Tyr-428 together coordinate L-kynurenine. Residues 451–471 (LLLYGSISAIISSAAIVGVLA) traverse the membrane as a helical segment.

This sequence belongs to the aromatic-ring hydroxylase family. KMO subfamily. FAD is required as a cofactor.

It is found in the mitochondrion outer membrane. The enzyme catalyses L-kynurenine + NADPH + O2 + H(+) = 3-hydroxy-L-kynurenine + NADP(+) + H2O. It participates in secondary metabolite biosynthesis. The protein operates within cofactor biosynthesis; NAD(+) biosynthesis; quinolinate from L-kynurenine: step 1/3. Its function is as follows. Indoleamine 2,3-dioxygenase; part of the gene cluster that mediates the biosynthesis of aspcandine, a pyrrolobenzazepine alkaloid. Initially, the indoleamine 2,3-dioxygenase acdA accepts L-tryptophan and performs the oxidative opening of the indole ring to yield N'-formyl-L-kynurenine, which undergoes the spontaneous deformylation reaction to provide L-kynurenine. The kynurenine 3-monooxygenase acdD then hydroxylates L-kynurenine to afford 3-hydroxy-L-kynurenine. 3-hydroxy-L-kynurenine is activated by the A domain of the NRPS-PKS acdB and subsequently loaded onto the enzyme. The KS domain conducts the decarboxylative condensation of the 3-hydroxy-L-kynurenyl and malonyl moieties, and subsequent nucleophilic attacks by the two amino groups would occur nonenzymatically at two distinct positions, achieving the chain release and the construction of the tricyclic system. Finally, the dehydration reaction completes the biosynthesis to yield aspcandine. The chain is Kynurenine 3-monooxygenase acdD from Aspergillus candidus.